The chain runs to 142 residues: 3-hydroxyacyl-[acyl-carrier-protein] dehydratase FabZ (142 aa).

H47 is an active-site residue.

It belongs to the thioester dehydratase family. FabZ subfamily.

The protein localises to the cytoplasm. The catalysed reaction is a (3R)-hydroxyacyl-[ACP] = a (2E)-enoyl-[ACP] + H2O. Involved in unsaturated fatty acids biosynthesis. Catalyzes the dehydration of short chain beta-hydroxyacyl-ACPs and long chain saturated and unsaturated beta-hydroxyacyl-ACPs. This chain is 3-hydroxyacyl-[acyl-carrier-protein] dehydratase FabZ, found in Coxiella burnetii (strain RSA 331 / Henzerling II).